The primary structure comprises 202 residues: MSDKAAAPRKQGRNNGAVVMMCLSFVFGMGAMSYAAVPLYRIFCQVTGYNGTTQRVEQMSSVVLDRKMRVTFDANVAPGLQWNFKPVEREVNPKIGETIQVNFVAENKSNETQRGQAVFNVTPGEAGAYFNKVQCFCFTETDLKPGEKLEMPVVFYIDPEIVKAVESKDIHTVTLSYTFYPKEGPKPVASNEGGTVKIEKKL.

Residues 1-14 (MSDKAAAPRKQGRN) lie on the Cytoplasmic side of the membrane. A helical; Signal-anchor for type II membrane protein transmembrane segment spans residues 15–37 (NGAVVMMCLSFVFGMGAMSYAAV). The Periplasmic portion of the chain corresponds to 38 to 202 (PLYRIFCQVT…GGTVKIEKKL (165 aa)).

This sequence belongs to the COX11/CtaG family.

Its subcellular location is the cell inner membrane. Exerts its effect at some terminal stage of cytochrome c oxidase synthesis, probably by being involved in the insertion of the copper B into subunit I. This Rhizobium etli (strain ATCC 51251 / DSM 11541 / JCM 21823 / NBRC 15573 / CFN 42) protein is Cytochrome c oxidase assembly protein CtaG.